Reading from the N-terminus, the 244-residue chain is Tyrosine recombinase XerD-like (244 aa).

Residues 1 to 73 (MRDRISAFLE…ACNQFLYFLY (73 aa)) enclose the Core-binding (CB) domain. Positions 90–244 (AEKKTEKPEI…KTVLTLEKYR (155 aa)) constitute a Tyr recombinase domain. Active-site residues include Lys-150 and Arg-211. The active-site O-(3'-phospho-DNA)-tyrosine intermediate is Tyr-243.

The protein belongs to the 'phage' integrase family. XerD-like subfamily.

Its subcellular location is the cytoplasm. Functionally, putative tyrosine recombinase. Not involved in the cutting and rejoining of the recombining DNA molecules on dif(SL) site. The polypeptide is Tyrosine recombinase XerD-like (Streptococcus pneumoniae (strain Hungary19A-6)).